Reading from the N-terminus, the 293-residue chain is Formamidopyrimidine-DNA glycosylase (293 aa).

Proline 2 acts as the Schiff-base intermediate with DNA in catalysis. The Proton donor role is filled by glutamate 3. Catalysis depends on lysine 60, which acts as the Proton donor; for beta-elimination activity. DNA is bound by residues histidine 110, arginine 129, and arginine 174. The segment at asparagine 259–lysine 293 adopts an FPG-type zinc-finger fold. Catalysis depends on arginine 283, which acts as the Proton donor; for delta-elimination activity.

Belongs to the FPG family. As to quaternary structure, monomer. The cofactor is Zn(2+).

It catalyses the reaction Hydrolysis of DNA containing ring-opened 7-methylguanine residues, releasing 2,6-diamino-4-hydroxy-5-(N-methyl)formamidopyrimidine.. The catalysed reaction is 2'-deoxyribonucleotide-(2'-deoxyribose 5'-phosphate)-2'-deoxyribonucleotide-DNA = a 3'-end 2'-deoxyribonucleotide-(2,3-dehydro-2,3-deoxyribose 5'-phosphate)-DNA + a 5'-end 5'-phospho-2'-deoxyribonucleoside-DNA + H(+). Involved in base excision repair of DNA damaged by oxidation or by mutagenic agents. Acts as a DNA glycosylase that recognizes and removes damaged bases. Has a preference for oxidized purines, such as 7,8-dihydro-8-oxoguanine (8-oxoG). Has AP (apurinic/apyrimidinic) lyase activity and introduces nicks in the DNA strand. Cleaves the DNA backbone by beta-delta elimination to generate a single-strand break at the site of the removed base with both 3'- and 5'-phosphates. The polypeptide is Formamidopyrimidine-DNA glycosylase (Prochlorococcus marinus (strain MIT 9215)).